A 750-amino-acid chain; its full sequence is Photosystem I P700 chlorophyll a apoprotein A1 (750 aa).

A run of 8 helical transmembrane segments spans residues valine 70–alanine 93, leucine 156–histidine 179, leucine 195–leucine 219, isoleucine 291–tyrosine 309, tryptophan 346–tyrosine 369, leucine 385–valine 411, alanine 433–histidine 455, and phenylalanine 531–leucine 549. The [4Fe-4S] cluster site is built by cysteine 573 and cysteine 582. 2 helical membrane-spanning segments follow: residues histidine 589–tryptophan 610 and leucine 664–phenylalanine 686. A chlorophyll a'-binding site is contributed by histidine 675. Positions 683 and 691 each coordinate chlorophyll a. Residue tryptophan 692 participates in phylloquinone binding. Residues alanine 724–alanine 744 form a helical membrane-spanning segment.

It belongs to the PsaA/PsaB family. As to quaternary structure, the PsaA/B heterodimer binds the P700 chlorophyll special pair and subsequent electron acceptors. PSI consists of a core antenna complex that captures photons, and an electron transfer chain that converts photonic excitation into a charge separation. The eukaryotic PSI reaction center is composed of at least 11 subunits. Requires P700 is a chlorophyll a/chlorophyll a' dimer, A0 is one or more chlorophyll a, A1 is one or both phylloquinones and FX is a shared 4Fe-4S iron-sulfur center. as cofactor.

The protein resides in the plastid. It localises to the chloroplast thylakoid membrane. It catalyses the reaction reduced [plastocyanin] + hnu + oxidized [2Fe-2S]-[ferredoxin] = oxidized [plastocyanin] + reduced [2Fe-2S]-[ferredoxin]. Functionally, psaA and PsaB bind P700, the primary electron donor of photosystem I (PSI), as well as the electron acceptors A0, A1 and FX. PSI is a plastocyanin-ferredoxin oxidoreductase, converting photonic excitation into a charge separation, which transfers an electron from the donor P700 chlorophyll pair to the spectroscopically characterized acceptors A0, A1, FX, FA and FB in turn. Oxidized P700 is reduced on the lumenal side of the thylakoid membrane by plastocyanin. In Nymphaea alba (White water-lily), this protein is Photosystem I P700 chlorophyll a apoprotein A1.